Reading from the N-terminus, the 344-residue chain is uncharacterized protein (344 aa).

This sequence belongs to the glycosyltransferase 28 family.

This is an uncharacterized protein from Methanopyrus kandleri (strain AV19 / DSM 6324 / JCM 9639 / NBRC 100938).